A 312-amino-acid chain; its full sequence is Olfactory receptor 6X1 (312 aa).

Residues 1–23 (MRNGTVITEFILLGFPVIQGLQT) are Extracellular-facing. A glycan (N-linked (GlcNAc...) asparagine) is linked at Asn3. The chain crosses the membrane as a helical span at residues 24 to 44 (PLFIAIFLTYILTLAGNGLII). Residues 45-52 (ATVWAEPR) are Cytoplasmic-facing. Residues 53–73 (LQIPMYFFLCNLSFLEIWYTT) form a helical membrane-spanning segment. The Extracellular segment spans residues 74–97 (TVIPKLLGTFVVARTVICMSCCLL). A disulfide bridge links Cys95 with Cys187. The helical transmembrane segment at 98 to 118 (QAFFHFFVGTTEFLILTIMSF) threads the bilayer. Residues 119–137 (DRYLTICNPLHHPTIMTSK) lie on the Cytoplasmic side of the membrane. The chain crosses the membrane as a helical span at residues 138-158 (LCLQLALSSWVVGFTIVFCQT). The Extracellular segment spans residues 159-195 (MLLIQLPFCGNNVISHFYCDVGPSLKAACIDTSILEL). Residues 196–215 (LGVIATILVIPGSLLFNMIS) form a helical membrane-spanning segment. The Cytoplasmic portion of the chain corresponds to 216–235 (YIYILSAILRIPSATGHQKT). The helical transmembrane segment at 236-256 (FSTCASHLTVVSLLYGAVLFM) threads the bilayer. Topologically, residues 257-269 (YLRPTAHSSFKIN) are extracellular. Residues 270–290 (KVVSVLNTILTPLLNPFIYTI) form a helical membrane-spanning segment. Over 291–312 (RNKEVKGALRKAMTCPKTGHAK) the chain is Cytoplasmic.

Belongs to the G-protein coupled receptor 1 family.

It localises to the cell membrane. Its function is as follows. Odorant receptor. The chain is Olfactory receptor 6X1 (OR6X1) from Homo sapiens (Human).